Consider the following 283-residue polypeptide: NAD kinase (283 aa).

Catalysis depends on Asp-61, which acts as the Proton acceptor. NAD(+)-binding positions include Asp-61–Gly-62, Asn-134–Asp-135, Arg-145, Asp-164, Thr-175–Ser-180, and Gln-234.

Belongs to the NAD kinase family. A divalent metal cation serves as cofactor.

The protein localises to the cytoplasm. The enzyme catalyses NAD(+) + ATP = ADP + NADP(+) + H(+). Its function is as follows. Involved in the regulation of the intracellular balance of NAD and NADP, and is a key enzyme in the biosynthesis of NADP. Catalyzes specifically the phosphorylation on 2'-hydroxyl of the adenosine moiety of NAD to yield NADP. This chain is NAD kinase, found in Clostridium kluyveri (strain NBRC 12016).